The following is a 37-amino-acid chain: Cytochrome b6-f complex subunit 7 (37 aa).

The chain crosses the membrane as a helical span at residues 11–29 (AILSIVLVLVGLAWGFLLL).

This sequence belongs to the PetM family. In terms of assembly, the 4 large subunits of the cytochrome b6-f complex are cytochrome b6, subunit IV (17 kDa polypeptide, PetD), cytochrome f and the Rieske protein, while the 4 small subunits are PetG, PetL, PetM and PetN. The complex functions as a dimer.

It is found in the cellular thylakoid membrane. Functionally, component of the cytochrome b6-f complex, which mediates electron transfer between photosystem II (PSII) and photosystem I (PSI), cyclic electron flow around PSI, and state transitions. In Gloeothece citriformis (strain PCC 7424) (Cyanothece sp. (strain PCC 7424)), this protein is Cytochrome b6-f complex subunit 7.